The chain runs to 211 residues: Uridine kinase (211 aa).

Position 12 to 19 (12 to 19 (GGSGSGKT)) interacts with ATP.

It belongs to the uridine kinase family.

It is found in the cytoplasm. It catalyses the reaction uridine + ATP = UMP + ADP + H(+). The enzyme catalyses cytidine + ATP = CMP + ADP + H(+). Its pathway is pyrimidine metabolism; CTP biosynthesis via salvage pathway; CTP from cytidine: step 1/3. It functions in the pathway pyrimidine metabolism; UMP biosynthesis via salvage pathway; UMP from uridine: step 1/1. This Geobacillus sp. (strain WCH70) protein is Uridine kinase.